Reading from the N-terminus, the 208-residue chain is Small ribosomal subunit protein uS4 (208 aa).

The region spanning 95 to 155 is the S4 RNA-binding domain; the sequence is TRLDALVLRA…AKSQTMVPFQ (61 aa).

This sequence belongs to the universal ribosomal protein uS4 family. Part of the 30S ribosomal subunit. Contacts protein S5. The interaction surface between S4 and S5 is involved in control of translational fidelity.

In terms of biological role, one of the primary rRNA binding proteins, it binds directly to 16S rRNA where it nucleates assembly of the body of the 30S subunit. Functionally, with S5 and S12 plays an important role in translational accuracy. In Bifidobacterium adolescentis (strain ATCC 15703 / DSM 20083 / NCTC 11814 / E194a), this protein is Small ribosomal subunit protein uS4.